A 581-amino-acid polypeptide reads, in one-letter code: MDEESLDGLLFKDHDFSSDLLRQLNSLRQSRILTDVSICAGAREIPCHRNVLASSSPYFRAMFCSSFREKSEAKVQLKGIDPPTLDQIVSYVYTGEAHIATDNVLPVMEAASMLQFPKLFEACSSYLQSQLAPSNCLGMIRLSEILSCETLKKKAREVALTSFPEVAASADLKELCALELRDYLGDDGLCGEEEKVFEALMVWIKHDLQARKRYMQELFKQVRLQYIHPAFFHHFIANDALLQSSPACQIILETAKRQMFSLCGTTVPDCKLLLHVPPRNSYQDFLILLGGRKDSQQTTRDVLLYSKQTGQWQSLAKLPTRLYKASAITLHRSIYVLGGMAVSSGRSLVSHNVYIFSLKLNQWRLGEPMLVARYSHRSTAHKNFIFSIGGIGEGQELMGSMERYDSICNVWESMASMPVGVLHPAVAVKDQRLYLFGGEDIMQNPVRLIQVYHISRNSWFKMETRMIKNVCAPAVVLGERIVIVGGYTRRILAYDPQSNKFVKCADMKDRRMHHGATVMGNKLYVTGGRRLTTDCNIEDSASFDCYDPETDTWTSQGQLPHKLFDHACLTLQCIPRTSGLP.

In terms of domain architecture, BTB spans 34–101; it reads TDVSICAGAR…VYTGEAHIAT (68 aa). The 102-residue stretch at 136-237 folds into the BACK domain; sequence CLGMIRLSEI…HPAFFHHFIA (102 aa). Kelch repeat units lie at residues 285–332, 334–383, 384–431, 433–479, 480–521, and 523–573; these read FLIL…TLHR, IYVL…AHKN, FIFS…VKDQ, LYLF…VLGE, RIVI…VMGN, and LYVT…TLQC.

The polypeptide is Kelch-like protein 38 (KLHL38) (Homo sapiens (Human)).